The primary structure comprises 482 residues: Membrane-bound lytic murein transglycosylase F (482 aa).

The signal sequence occupies residues 1–18; it reads MKGLFLRIITALALLFWA. Positions 19-267 are non-LT domain; it reads IDMVFPWQFL…NLKEKYLGHI (249 aa). Residues 268–482 form an LT domain region; sequence SQFDYVDTRS…NLEEIKENKD (215 aa). Glutamate 312 is a catalytic residue. Over residues 457-470 the composition is skewed to polar residues; that stretch reads ENQTTNDNANNESA. The interval 457-482 is disordered; that stretch reads ENQTTNDNANNESAVKNLEEIKENKD. The span at 473-482 shows a compositional bias: basic and acidic residues; the sequence is NLEEIKENKD.

In the N-terminal section; belongs to the bacterial solute-binding protein 3 family. It in the C-terminal section; belongs to the transglycosylase Slt family.

It is found in the cell outer membrane. It catalyses the reaction Exolytic cleavage of the (1-&gt;4)-beta-glycosidic linkage between N-acetylmuramic acid (MurNAc) and N-acetylglucosamine (GlcNAc) residues in peptidoglycan, from either the reducing or the non-reducing ends of the peptidoglycan chains, with concomitant formation of a 1,6-anhydrobond in the MurNAc residue.. In terms of biological role, murein-degrading enzyme that degrades murein glycan strands and insoluble, high-molecular weight murein sacculi, with the concomitant formation of a 1,6-anhydromuramoyl product. Lytic transglycosylases (LTs) play an integral role in the metabolism of the peptidoglycan (PG) sacculus. Their lytic action creates space within the PG sacculus to allow for its expansion as well as for the insertion of various structures such as secretion systems and flagella. This Haemophilus influenzae (strain 86-028NP) protein is Membrane-bound lytic murein transglycosylase F.